Here is a 512-residue protein sequence, read N- to C-terminus: D-alanine--D-alanyl carrier protein ligase (512 aa).

152 to 153 (TS) is an ATP binding site. Residue Asp199 coordinates D-alanine. ATP is bound at residue 294 to 299 (NAYGPT). Val303 contributes to the D-alanine binding site. ATP contacts are provided by residues Asp385, 397-400 (YGGR), and Lys499. Residue Lys499 coordinates D-alanine.

Belongs to the ATP-dependent AMP-binding enzyme family. DltA subfamily.

The protein localises to the cytoplasm. It carries out the reaction holo-[D-alanyl-carrier protein] + D-alanine + ATP = D-alanyl-[D-alanyl-carrier protein] + AMP + diphosphate. It functions in the pathway cell wall biogenesis; lipoteichoic acid biosynthesis. Functionally, catalyzes the first step in the D-alanylation of lipoteichoic acid (LTA), the activation of D-alanine and its transfer onto the D-alanyl carrier protein (Dcp) DltC. In an ATP-dependent two-step reaction, forms a high energy D-alanyl-AMP intermediate, followed by transfer of the D-alanyl residue as a thiol ester to the phosphopantheinyl prosthetic group of the Dcp. D-alanylation of LTA plays an important role in modulating the properties of the cell wall in Gram-positive bacteria, influencing the net charge of the cell wall. The protein is D-alanine--D-alanyl carrier protein ligase of Streptococcus pyogenes serotype M49 (strain NZ131).